We begin with the raw amino-acid sequence, 521 residues long: MKSQGQHWYSSSDKNCKVSFREKLLIIDSNLGVQDVENLKFLCIGLVPNKKLEKSSSASDVFEHLLAEDLLSEEDPFFLAELLYIIRQKKLLQHLNCTKEEVERLLPTRQRVSLFRNLLYELSEGIDSENLKDMIFLLKDSLPKTEMTSLSFLAFLEKQGKIDEDNLTCLEDLCKTVVPKLLRNIEKYKREKAIQIVTPPVDKEAESYQGEEELVSQTDVKTFLEALPQESWQNKHAGSNGNRATNGAPSLVSRGMQGASANTLNSETSTKRAAVYRMNRNHRGLCVIVNNHSFTSLKDRQGTHKDAEILSHVFQWLGFTVHIHNNVTKVEMEMVLQKQKCNPAHADGDCFVFCILTHGRFGAVYSSDEALIPIREIMSHFTALQCPRLAEKPKLFFIQACQGEEIQPSVSIEADALNPEQAPTSLQDSIPAEADFLLGLATVPGYVSFRHVEEGSWYIQSLCNHLKKLVPRMLKFLEKTMEIRGRKRTVWGAKQISATSLPTAISAQTPRPPMRRWSSVS.

A propeptide spanning residues 1–219 (MKSQGQHWYS…GEEELVSQTD (219 aa)) is cleaved from the precursor. DED domains follow at residues 19-97 (SFRE…HLNC) and 114-187 (LFRN…NIEK). 2 stretches are compositionally biased toward polar residues: residues 231-248 (SWQNKHAGSNGNRATNGA) and 259-268 (ASANTLNSET). Residues 231–269 (SWQNKHAGSNGNRATNGAPSLVSRGMQGASANTLNSETS) are disordered. Catalysis depends on residues His358 and Cys401.

The protein belongs to the peptidase C14A family. Heterotetramer that consists of two anti-parallel arranged heterodimers, each one formed by a 23/17 kDa (p23/17) (depending on the splicing events) and a 12 kDa (p12) subunit. Self-associates. Interacts with FADD and CASP8. Found in a Fas signaling complex consisting of FAS, FADD, CASP8 and CASP10. Interacts with RFFL and RNF34; negatively regulate CASP10 through proteasomal degradation. Interacts with RIOK3. Cleavage by granzyme B and autocatalytic activity generate the two active subunits. In terms of tissue distribution, detectable in most tissues. Lowest expression is seen in brain, kidney, prostate, testis and colon.

It catalyses the reaction Strict requirement for Asp at position P1 and has a preferred cleavage sequence of Leu-Gln-Thr-Asp-|-Gly.. Its function is as follows. Involved in the activation cascade of caspases responsible for apoptosis execution. Recruited to both Fas- and TNFR-1 receptors in a FADD dependent manner. May participate in the granzyme B apoptotic pathways. Cleaves and activates effector caspases CASP3, CASP4, CASP6, CASP7, CASP8 and CASP9. Hydrolyzes the small- molecule substrates, Tyr-Val-Ala-Asp-|-AMC and Asp-Glu-Val-Asp-|-AMC. Functionally, isoform 7 can enhance NF-kappaB activity but promotes only slight apoptosis. In terms of biological role, isoform C is proteolytically inactive. The polypeptide is Caspase-10 (CASP10) (Homo sapiens (Human)).